Consider the following 364-residue polypeptide: Anthranilate phosphoribosyltransferase (364 aa).

5-phospho-alpha-D-ribose 1-diphosphate contacts are provided by residues glycine 101, 104-105 (GD), threonine 109, 111-114 (NLST), 129-137 (KHGNRAASS), and glycine 141. Position 101 (glycine 101) interacts with anthranilate. Serine 113 contributes to the Mg(2+) binding site. Asparagine 132 provides a ligand contact to anthranilate. An anthranilate-binding site is contributed by arginine 187. 2 residues coordinate Mg(2+): aspartate 245 and glutamate 246.

This sequence belongs to the anthranilate phosphoribosyltransferase family. Homodimer. Mg(2+) serves as cofactor.

The catalysed reaction is N-(5-phospho-beta-D-ribosyl)anthranilate + diphosphate = 5-phospho-alpha-D-ribose 1-diphosphate + anthranilate. Its pathway is amino-acid biosynthesis; L-tryptophan biosynthesis; L-tryptophan from chorismate: step 2/5. Its function is as follows. Catalyzes the transfer of the phosphoribosyl group of 5-phosphorylribose-1-pyrophosphate (PRPP) to anthranilate to yield N-(5'-phosphoribosyl)-anthranilate (PRA). The chain is Anthranilate phosphoribosyltransferase from Mycolicibacterium vanbaalenii (strain DSM 7251 / JCM 13017 / BCRC 16820 / KCTC 9966 / NRRL B-24157 / PYR-1) (Mycobacterium vanbaalenii).